The following is a 272-amino-acid chain: uncharacterized protein (272 aa).

This sequence belongs to the chlamydial CPn_0389/CT_041/TC_0311 family.

This is an uncharacterized protein from Chlamydia pneumoniae (Chlamydophila pneumoniae).